The following is a 59-amino-acid chain: Large ribosomal subunit protein uL30 (59 aa).

The protein belongs to the universal ribosomal protein uL30 family. In terms of assembly, part of the 50S ribosomal subunit.

The protein is Large ribosomal subunit protein uL30 of Enterobacter sp. (strain 638).